The sequence spans 473 residues: MNGLEATVSSFPSVKDSVPLTRTAVQRTKASVAVLHLGCEKNRVDTEHMLGLLAQAGYRVDGDEESANYVIVNTCSFIEAARRESVSTLMELAVQGKKIIIAGCLAQHFQEELLQEIPEAVAIVGTGDYHQIVQIIERVERGERVNAVTSSLDYIADETVPRYRTTHAPVAYLRVAEGCNYRCSFCIIPHLRGDQRSRSIESILREAEQLAEEGVQELILISQITTHYGIDLYGEPRLADLIRALGKIPIPWIRMLYAYPTGVTPAVVEAIQETPNFLPYLDLPLQHSHPQILKAMNRPWQGQVNDRVIERLRQALPNAVLRTSFIVGFPGETEEHFQHLLDFVQRHQFDHVGVFTFSPEEGTPAYHLPHQVPEAVKQERRARLMQVQQGITFRRNREQVGRVVPVLLEQENPRTGEWIGRSPRFAPEVDGVVYVQGQGSLGSLVPVQITRAEPYDLFGQVVAAPEGFSWSGR.

The region spanning 30-141 is the MTTase N-terminal domain; sequence ASVAVLHLGC…IVQIIERVER (112 aa). The [4Fe-4S] cluster site is built by cysteine 39, cysteine 75, cysteine 104, cysteine 179, cysteine 183, and cysteine 186. The Radical SAM core domain occupies 165 to 394; that stretch reads TTHAPVAYLR…MQVQQGITFR (230 aa). The TRAM domain occupies 397-463; it reads REQVGRVVPV…PYDLFGQVVA (67 aa).

This sequence belongs to the methylthiotransferase family. RimO subfamily. It depends on [4Fe-4S] cluster as a cofactor.

Its subcellular location is the cytoplasm. It carries out the reaction L-aspartate(89)-[ribosomal protein uS12]-hydrogen + (sulfur carrier)-SH + AH2 + 2 S-adenosyl-L-methionine = 3-methylsulfanyl-L-aspartate(89)-[ribosomal protein uS12]-hydrogen + (sulfur carrier)-H + 5'-deoxyadenosine + L-methionine + A + S-adenosyl-L-homocysteine + 2 H(+). Its function is as follows. Catalyzes the methylthiolation of an aspartic acid residue of ribosomal protein uS12. The chain is Ribosomal protein uS12 methylthiotransferase RimO from Synechococcus sp. (strain JA-2-3B'a(2-13)) (Cyanobacteria bacterium Yellowstone B-Prime).